The following is a 307-amino-acid chain: Protein rep (307 aa).

DNA is bound at residue Tyr-219.

Belongs to the Gram-positive plasmids replication protein type 1 family.

The polypeptide is Protein rep (repA) (Bacillus sp).